A 118-amino-acid chain; its full sequence is Holo-[acyl-carrier-protein] synthase (118 aa).

Positions 5 and 50 each coordinate Mg(2+).

It belongs to the P-Pant transferase superfamily. AcpS family. Requires Mg(2+) as cofactor.

It is found in the cytoplasm. The enzyme catalyses apo-[ACP] + CoA = holo-[ACP] + adenosine 3',5'-bisphosphate + H(+). Functionally, transfers the 4'-phosphopantetheine moiety from coenzyme A to a Ser of acyl-carrier-protein. The protein is Holo-[acyl-carrier-protein] synthase of Wolinella succinogenes (strain ATCC 29543 / DSM 1740 / CCUG 13145 / JCM 31913 / LMG 7466 / NCTC 11488 / FDC 602W) (Vibrio succinogenes).